A 1376-amino-acid chain; its full sequence is Protein FAM135B (1376 aa).

A compositionally biased stretch (acidic residues) spans 431–442 (NEDECEFSEESP). Positions 431–489 (NEDECEFSEESPSENTHVGSKPHSIQSTTVHENASFEKPNVGTKAQEDCSTEGPEQGFD) are disordered. Positions 443 to 462 (SENTHVGSKPHSIQSTTVHE) are enriched in polar residues.

The protein belongs to the FAM135 family.

In Xenopus laevis (African clawed frog), this protein is Protein FAM135B (fam135b).